The primary structure comprises 192 residues: Archaemetzincin (192 aa).

His137 provides a ligand contact to Zn(2+). The Proton acceptor role is filled by Glu138. Residues His141, His147, Cys148, Cys153, Cys172, and Cys175 each contribute to the Zn(2+) site.

This sequence belongs to the peptidase M54 family. In terms of assembly, monomer. Zn(2+) serves as cofactor.

Probable zinc metalloprotease whose natural substrate is unknown. The sequence is that of Archaemetzincin from Pyrococcus furiosus (strain ATCC 43587 / DSM 3638 / JCM 8422 / Vc1).